We begin with the raw amino-acid sequence, 656 residues long: Threonine--tRNA ligase (656 aa).

Residues 1–63 (MAEIQLTFPD…LEDGAIEIIT (63 aa)) enclose the TGS domain. Positions 243–541 (DHRVIGNQLD…LTEIYKGAFP (299 aa)) are catalytic. Zn(2+) contacts are provided by cysteine 337, histidine 388, and histidine 518.

This sequence belongs to the class-II aminoacyl-tRNA synthetase family. In terms of assembly, homodimer. The cofactor is Zn(2+).

It is found in the cytoplasm. It carries out the reaction tRNA(Thr) + L-threonine + ATP = L-threonyl-tRNA(Thr) + AMP + diphosphate + H(+). Catalyzes the attachment of threonine to tRNA(Thr) in a two-step reaction: L-threonine is first activated by ATP to form Thr-AMP and then transferred to the acceptor end of tRNA(Thr). Also edits incorrectly charged L-seryl-tRNA(Thr). The sequence is that of Threonine--tRNA ligase from Latilactobacillus sakei subsp. sakei (strain 23K) (Lactobacillus sakei subsp. sakei).